A 137-amino-acid chain; its full sequence is Large ribosomal subunit protein uL16 (137 aa).

A compositionally biased stretch (basic residues) spans 1–17 (MLQPKRTKFRKTHKGRN). A disordered region spans residues 1–23 (MLQPKRTKFRKTHKGRNRGLAQN).

Belongs to the universal ribosomal protein uL16 family. Part of the 50S ribosomal subunit.

Binds 23S rRNA and is also seen to make contacts with the A and possibly P site tRNAs. The protein is Large ribosomal subunit protein uL16 of Pseudoalteromonas translucida (strain TAC 125).